The chain runs to 572 residues: Proline--tRNA ligase (572 aa).

It belongs to the class-II aminoacyl-tRNA synthetase family. ProS type 1 subfamily. Homodimer.

It localises to the cytoplasm. The enzyme catalyses tRNA(Pro) + L-proline + ATP = L-prolyl-tRNA(Pro) + AMP + diphosphate. Catalyzes the attachment of proline to tRNA(Pro) in a two-step reaction: proline is first activated by ATP to form Pro-AMP and then transferred to the acceptor end of tRNA(Pro). As ProRS can inadvertently accommodate and process non-cognate amino acids such as alanine and cysteine, to avoid such errors it has two additional distinct editing activities against alanine. One activity is designated as 'pretransfer' editing and involves the tRNA(Pro)-independent hydrolysis of activated Ala-AMP. The other activity is designated 'posttransfer' editing and involves deacylation of mischarged Ala-tRNA(Pro). The misacylated Cys-tRNA(Pro) is not edited by ProRS. This chain is Proline--tRNA ligase, found in Yersinia enterocolitica serotype O:8 / biotype 1B (strain NCTC 13174 / 8081).